The sequence spans 374 residues: Proteasomal ubiquitin receptor ADRM1 homolog (374 aa).

Residues S13–P131 form the Pru domain. Disordered stretches follow at residues D126–P166, S187–S223, and A334–D374. 2 stretches are compositionally biased toward polar residues: residues S141–M163 and P209–S223. The DEUBAD domain occupies S239 to A346. The segment covering D354–N368 has biased composition (basic and acidic residues).

Belongs to the ADRM1 family. Component of the 19S proteasome regulatory particle complex. The 26S proteasome consists of a 20S core particle (CP) and two 19S regulatory subunits (RP). Interacts with deubiquitinase ubh-4.

Its subcellular location is the cytoplasm. The protein resides in the nucleus. Functionally, may function as a proteasomal ubiquitin receptor. May promote the deubiquitinating activity associated with the 26S proteasome. In Caenorhabditis elegans, this protein is Proteasomal ubiquitin receptor ADRM1 homolog.